We begin with the raw amino-acid sequence, 231 residues long: Orotidine 5'-phosphate decarboxylase (231 aa).

Substrate is bound by residues Asp12, Lys34, 61-70, Thr120, Arg181, Gln190, Gly210, and Arg211; that span reads DLKFHDIPNT. Lys63 serves as the catalytic Proton donor.

The protein belongs to the OMP decarboxylase family. Type 1 subfamily. As to quaternary structure, homodimer.

The catalysed reaction is orotidine 5'-phosphate + H(+) = UMP + CO2. The protein operates within pyrimidine metabolism; UMP biosynthesis via de novo pathway; UMP from orotate: step 2/2. Catalyzes the decarboxylation of orotidine 5'-monophosphate (OMP) to uridine 5'-monophosphate (UMP). The protein is Orotidine 5'-phosphate decarboxylase of Alcanivorax borkumensis (strain ATCC 700651 / DSM 11573 / NCIMB 13689 / SK2).